The sequence spans 77 residues: Acyl carrier protein (77 aa).

Residues 2-77 form the Carrier domain; sequence ASIEKRIKEI…DAIDYITDHT (76 aa). Ser-37 carries the post-translational modification O-(pantetheine 4'-phosphoryl)serine.

Belongs to the acyl carrier protein (ACP) family. In terms of processing, 4'-phosphopantetheine is transferred from CoA to a specific serine of apo-ACP by AcpS. This modification is essential for activity because fatty acids are bound in thioester linkage to the sulfhydryl of the prosthetic group.

It is found in the cytoplasm. The protein operates within lipid metabolism; fatty acid biosynthesis. Carrier of the growing fatty acid chain in fatty acid biosynthesis. This is Acyl carrier protein from Geobacter sp. (strain M21).